We begin with the raw amino-acid sequence, 157 residues long: 2-C-methyl-D-erythritol 2,4-cyclodiphosphate synthase (157 aa).

Residues Asp8 and His10 each coordinate a divalent metal cation. Residues 8–10 (DVH) and 34–35 (HS) contribute to the 4-CDP-2-C-methyl-D-erythritol 2-phosphate site. Residue His42 participates in a divalent metal cation binding. 4-CDP-2-C-methyl-D-erythritol 2-phosphate is bound by residues 56–58 (DLG), 61–65 (FPDTD), 132–135 (TTTE), Phe139, and Arg142.

Belongs to the IspF family. Homotrimer. Requires a divalent metal cation as cofactor.

It catalyses the reaction 4-CDP-2-C-methyl-D-erythritol 2-phosphate = 2-C-methyl-D-erythritol 2,4-cyclic diphosphate + CMP. It participates in isoprenoid biosynthesis; isopentenyl diphosphate biosynthesis via DXP pathway; isopentenyl diphosphate from 1-deoxy-D-xylulose 5-phosphate: step 4/6. Functionally, involved in the biosynthesis of isopentenyl diphosphate (IPP) and dimethylallyl diphosphate (DMAPP), two major building blocks of isoprenoid compounds. Catalyzes the conversion of 4-diphosphocytidyl-2-C-methyl-D-erythritol 2-phosphate (CDP-ME2P) to 2-C-methyl-D-erythritol 2,4-cyclodiphosphate (ME-CPP) with a corresponding release of cytidine 5-monophosphate (CMP). This Salinibacter ruber (strain DSM 13855 / M31) protein is 2-C-methyl-D-erythritol 2,4-cyclodiphosphate synthase.